We begin with the raw amino-acid sequence, 507 residues long: Subtilisin-like protease 1 (507 aa).

The N-terminal stretch at Met-1–Ala-19 is a signal peptide. Residues Ala-20–Asn-116 constitute a propeptide that is removed on maturation. The region spanning Ser-34–Ile-113 is the Inhibitor I9 domain. The region spanning Ser-126 to Lys-400 is the Peptidase S8 domain. Catalysis depends on charge relay system residues Asp-158 and His-190. The tract at residues Gly-175–Met-198 is disordered. An N-linked (GlcNAc...) asparagine glycan is attached at Asn-251. Over residues Asn-282–Ser-294 the composition is skewed to polar residues. The tract at residues Asn-282–Ser-312 is disordered. Ser-345 serves as the catalytic Charge relay system. Over residues Ser-378–Ile-394 the composition is skewed to polar residues. The tract at residues Ser-378–Asp-486 is disordered. 2 stretches are compositionally biased toward pro residues: residues Lys-405–Pro-428 and Glu-438–Pro-449. The segment covering Phe-450–Pro-461 has biased composition (low complexity). The segment covering Ala-462 to Pro-476 has biased composition (pro residues).

It belongs to the peptidase S8 family.

Its subcellular location is the secreted. In terms of biological role, secreted subtilisin-like serine protease with keratinolytic activity that contributes to pathogenicity. The protein is Subtilisin-like protease 1 (SUB1) of Trichophyton tonsurans (Scalp ringworm fungus).